A 309-amino-acid polypeptide reads, in one-letter code: Ornithine carbamoyltransferase (309 aa).

Residues 51–54, Gln78, Arg102, and 129–132 contribute to the carbamoyl phosphate site; these read STRT and HPCQ. Residues Asn161, Asp225, and 229–230 contribute to the L-ornithine site; that span reads SM. Carbamoyl phosphate contacts are provided by residues 265–266 and Arg293; that span reads CL.

It belongs to the aspartate/ornithine carbamoyltransferase superfamily. OTCase family.

Its subcellular location is the cytoplasm. It carries out the reaction carbamoyl phosphate + L-ornithine = L-citrulline + phosphate + H(+). Its pathway is amino-acid biosynthesis; L-arginine biosynthesis; L-arginine from L-ornithine and carbamoyl phosphate: step 1/3. Functionally, reversibly catalyzes the transfer of the carbamoyl group from carbamoyl phosphate (CP) to the N(epsilon) atom of ornithine (ORN) to produce L-citrulline. This chain is Ornithine carbamoyltransferase, found in Mycolicibacterium paratuberculosis (strain ATCC BAA-968 / K-10) (Mycobacterium paratuberculosis).